Reading from the N-terminus, the 122-residue chain is Large ribosomal subunit protein uL14 (122 aa).

Belongs to the universal ribosomal protein uL14 family. Part of the 50S ribosomal subunit. Forms a cluster with proteins L3 and L19. In the 70S ribosome, L14 and L19 interact and together make contacts with the 16S rRNA in bridges B5 and B8.

Its function is as follows. Binds to 23S rRNA. Forms part of two intersubunit bridges in the 70S ribosome. In Thermoanaerobacter pseudethanolicus (strain ATCC 33223 / 39E) (Clostridium thermohydrosulfuricum), this protein is Large ribosomal subunit protein uL14.